The chain runs to 133 residues: DNA-directed RNA polymerase subunit omega (133 aa).

Belongs to the RNA polymerase subunit omega family. As to quaternary structure, the RNAP catalytic core consists of 2 alpha, 1 beta, 1 beta' and 1 omega subunit. When a sigma factor is associated with the core the holoenzyme is formed, which can initiate transcription.

It carries out the reaction RNA(n) + a ribonucleoside 5'-triphosphate = RNA(n+1) + diphosphate. In terms of biological role, promotes RNA polymerase assembly. Latches the N- and C-terminal regions of the beta' subunit thereby facilitating its interaction with the beta and alpha subunits. The protein is DNA-directed RNA polymerase subunit omega of Brucella canis (strain ATCC 23365 / NCTC 10854 / RM-666).